Consider the following 442-residue polypeptide: Coiled-coil domain-containing protein 112 (442 aa).

2 coiled-coil regions span residues L23–E116 and L217–V249. Disordered stretches follow at residues K245–K272, K289–S312, and E392–I442. 2 stretches are compositionally biased toward basic and acidic residues: residues K256–R268 and L294–R310. A coiled-coil region spans residues R281–R400.

It localises to the cytoplasm. The protein resides in the cytoskeleton. The protein localises to the microtubule organizing center. It is found in the centrosome. Its subcellular location is the centriolar satellite. The chain is Coiled-coil domain-containing protein 112 (Ccdc112) from Mus musculus (Mouse).